Here is a 535-residue protein sequence, read N- to C-terminus: Tetrathionate hydrolase (535 aa).

The N-terminal stretch at 1 to 39 is a signal peptide; it reads MNLKILVGLFILGIIILSAMTFLNFTTIVAQDKGDQQPK. Residue Asn-50 is glycosylated (N-linked (GlcNAc...) asparagine).

This sequence belongs to the tetrathionate hydrolase family. In terms of assembly, monomer and homodimer; in equilibrium.

The protein localises to the cell surface. It carries out the reaction tetrathionate + H2O = sulfur + thiosulfate + sulfate + H(+). Catalyzes the hydrolysis of tetrathionate to generate elemental sulfur, thiosulfate and sulfate. The polypeptide is Tetrathionate hydrolase (Acidianus ambivalens (Desulfurolobus ambivalens)).